Consider the following 63-residue polypeptide: DNA gyrase inhibitor YacG (63 aa).

Cysteine 10, cysteine 13, cysteine 29, and cysteine 33 together coordinate Zn(2+).

The protein belongs to the DNA gyrase inhibitor YacG family. Interacts with GyrB. It depends on Zn(2+) as a cofactor.

Functionally, inhibits all the catalytic activities of DNA gyrase by preventing its interaction with DNA. Acts by binding directly to the C-terminal domain of GyrB, which probably disrupts DNA binding by the gyrase. The chain is DNA gyrase inhibitor YacG from Chromobacterium violaceum (strain ATCC 12472 / DSM 30191 / JCM 1249 / CCUG 213 / NBRC 12614 / NCIMB 9131 / NCTC 9757 / MK).